Here is a 61-residue protein sequence, read N- to C-terminus: Double gene block protein 1 (61 aa).

The disordered stretch occupies residues 1–45 (MDIESEVPVVGKQMLAGNRGKQKTRRSVAKDAIRKPASDSTNGGN). Residues 17 to 35 (GNRGKQKTRRSVAKDAIRK) form an RNA-binding region. Residues 28 to 37 (VAKDAIRKPA) are compositionally biased toward basic and acidic residues.

Belongs to the carmovirus double gene block protein 1 family. Homodimer.

Functionally, cell-to-cell movement. Displays RNA-binding activity. The polypeptide is Double gene block protein 1 (Carnation mottle virus (CarMV)).